Consider the following 128-residue polypeptide: Sulfurtransferase TusD (128 aa).

The active-site Cysteine persulfide intermediate is the cysteine 78.

It belongs to the DsrE/TusD family. In terms of assembly, heterohexamer, formed by a dimer of trimers. The hexameric TusBCD complex contains 2 copies each of TusB, TusC and TusD. The TusBCD complex interacts with TusE.

The protein localises to the cytoplasm. Functionally, part of a sulfur-relay system required for 2-thiolation of 5-methylaminomethyl-2-thiouridine (mnm(5)s(2)U) at tRNA wobble positions. Accepts sulfur from TusA and transfers it in turn to TusE. The sequence is that of Sulfurtransferase TusD from Salmonella typhi.